The following is a 633-amino-acid chain: Glutamyl-tRNA(Gln) amidotransferase subunit E (633 aa).

It belongs to the GatB/GatE family. GatE subfamily. As to quaternary structure, heterodimer of GatD and GatE.

The catalysed reaction is L-glutamyl-tRNA(Gln) + L-glutamine + ATP + H2O = L-glutaminyl-tRNA(Gln) + L-glutamate + ADP + phosphate + H(+). In terms of biological role, allows the formation of correctly charged Gln-tRNA(Gln) through the transamidation of misacylated Glu-tRNA(Gln) in organisms which lack glutaminyl-tRNA synthetase. The reaction takes place in the presence of glutamine and ATP through an activated gamma-phospho-Glu-tRNA(Gln). The GatDE system is specific for glutamate and does not act on aspartate. In Saccharolobus islandicus (strain L.S.2.15 / Lassen #1) (Sulfolobus islandicus), this protein is Glutamyl-tRNA(Gln) amidotransferase subunit E.